The sequence spans 397 residues: FAD-dependent monooxygenase trt8 (397 aa).

Tyrosine 53 is a catalytic residue. FAD-binding residues include aspartate 145 and alanine 158.

Belongs to the paxM FAD-dependent monooxygenase family. The cofactor is FAD.

The protein operates within secondary metabolite biosynthesis; terpenoid biosynthesis. In terms of biological role, FAD-dependent monooxygenase; part of the gene cluster that mediates the biosynthesis of terretonin, a fungal meroterpenoid that acts as a mycotoxin. The first step of the pathway is the synthesis of 3,5-dimethylorsellinic acid (DMOA) by the polyketide synthase trt4. DMOA is then prenylated into farnesyl-DMOA by the polyprenyl transferase trt2. Methylation by the methyltransferase trt5 then leads to farnesyl-DMOA methyl ester which is further subject to epoxidation by the FAD-dependent monooxygenase trt8 to yield epoxyfarnesyl-DMOA methyl ester. Cyclization of epoxyfarnesyl-DMOA methyl ester by the terpene cyclase trt1 leads to a tetracycle intermediate which is in turn converted to preterretonin. Dehydrogenase trt9 comes next to transform preterretonin to preterrenoid. The FAD-dependent monooxygenase trt3 is then required for the C-hydroxylation at C16 of preterrenoid to yield terrenoid. The cytochrome P450 trt6 catalyzes three successive oxidations to transform terrenoid into an unstable intermediate, which then undergoes the D-ring expansion and unusual rearrangement of the methoxy group to afford the core skeleton of terretonin. Trt14 catalyzes the D-ring expansion of terretonin involving intramolecular methoxy rearrangement as well as the hydrolysis of the expanded D-ring and the methyl ester moiety. Finally, the nonheme iron-dependent dioxygenase trt7 accomplishes the last two oxidation reactions steps to complete the biosynthesis of terretonin. Terretonin C is produced via spontaneous decarboxylation of the terretonin precursor. Another shunt product of the terretonin biosynthesis is dihydrofarnesyl-DMOA, derived from epoxyfarnesyl-DMOA through hydrolysis of the epoxide. The protein is FAD-dependent monooxygenase trt8 of Aspergillus terreus (strain NIH 2624 / FGSC A1156).